The following is a 632-amino-acid chain: Tetratricopeptide repeat protein 39B (632 aa).

TPR repeat units lie at residues 343–376 (SLVLFYHARIELLKGNLEEAQEVFRKCVSVQEEW), 535–568 (CLVKLLKGCCLKNLQRPLQAELCYNHVVESEKLL), and 576–609 (PFTLFELASLYKSQGEIDKAIKFLETARNNYKDY).

It belongs to the TTC39 family.

Its function is as follows. Regulates high density lipoprotein (HDL) cholesterol metabolism by promoting the ubiquitination and degradation of the oxysterols receptors LXR (NR1H2 and NR1H3). This chain is Tetratricopeptide repeat protein 39B (TTC39B), found in Macaca fascicularis (Crab-eating macaque).